A 485-amino-acid chain; its full sequence is G2/mitotic-specific cyclin-A1 (485 aa).

Positions Met-1–Asn-24 are disordered. The segment covering Lys-8–Asn-24 has biased composition (polar residues).

This sequence belongs to the cyclin family. Cyclin AB subfamily. In terms of tissue distribution, expressed in the cell lineages ABarp, C and E as well as the NSM neuroblasts.

In terms of biological role, involved in the control of the cell cycle after S phase. May bind to and activate cdk-1 and/or cdk-2 to promote cell cycle progression. Necessary for embryogenesis. In Caenorhabditis elegans, this protein is G2/mitotic-specific cyclin-A1 (cya-1).